We begin with the raw amino-acid sequence, 154 residues long: Homeobox protein engrailed (154 aa).

The segment at residues 37–96 (EKRPRTAFSASQLQRLKQEFQQSNYLTEQRRRSLAKELTLSESQIKIWFQNKRAKIKKAS) is a DNA-binding region (homeobox). The disordered stretch occupies residues 127-154 (KLLNGQNTSGDCSRSDYTSDSDGDSLTH). The segment covering 129–144 (LNGQNTSGDCSRSDYT) has biased composition (polar residues). Acidic residues predominate over residues 145–154 (SDSDGDSLTH).

It belongs to the engrailed homeobox family.

It localises to the nucleus. The protein is Homeobox protein engrailed (EN) of Tripneustes gratilla (Hawaian sea urchin).